Consider the following 236-residue polypeptide: Mitochondrial-abundant heat soluble protein (236 aa).

The N-terminal 73 residues, 1–73 (MSRYLLRDVQ…AARAGVVLRG (73 aa)), are a transit peptide targeting the mitochondrion. Disordered stretches follow at residues 102–135 (RIHSQSSQKQAPTTVPTGSVSNSPQPEGKANEAA) and 165–209 (RSNG…EIVA). 2 stretches are compositionally biased toward polar residues: residues 105-126 (SQSSQKQAPTTVPTGSVSNSPQ) and 192-202 (APDSSKNTKSV). Residues 126-143 (QPEGKANEAAERAKQFMN) carry the MAHS motif motif.

The protein resides in the mitochondrion. Functionally, mitochondrial heat soluble protein acting as a molecular shield in water-deficient condition. The chain is Mitochondrial-abundant heat soluble protein from Ramazzottius varieornatus (Water bear).